We begin with the raw amino-acid sequence, 428 residues long: Glutamate-1-semialdehyde 2,1-aminomutase (428 aa).

The residue at position 265 (Lys-265) is an N6-(pyridoxal phosphate)lysine.

It belongs to the class-III pyridoxal-phosphate-dependent aminotransferase family. HemL subfamily. Homodimer. The cofactor is pyridoxal 5'-phosphate.

It is found in the cytoplasm. The catalysed reaction is (S)-4-amino-5-oxopentanoate = 5-aminolevulinate. It functions in the pathway porphyrin-containing compound metabolism; protoporphyrin-IX biosynthesis; 5-aminolevulinate from L-glutamyl-tRNA(Glu): step 2/2. This chain is Glutamate-1-semialdehyde 2,1-aminomutase, found in Shewanella woodyi (strain ATCC 51908 / MS32).